The primary structure comprises 425 residues: MLNIKWIRENQELFDEKLSQRFIEPMSSKIAMLDEEKRKITSLIQEFQHARRVKSKILGNMTSKSSEEFEGLQRDVKHINEKLEELEKDLNNNNELNELLNMLPNIPDDEVPYGIDESMNKLVRTYGEINPNALNKQHFELGTKLNLMDFEQTTKISGARFVTLKGDLAKLERALINFMIDVHTKEFDFFEISPPVLVRDNAMYNAGQLPKFTEESFATTKGYRLIPTAEVSLVNIVADTIISREKLPMRYVAYTQCFRSEAGSSGRDTRGMIRLHQFGKVELVSITTPEESQNEHEYITNASETILQKLNLPYRIMLLCTGDMGFAAKKTYDIEVWLPGQKQYREIASCSNCGDFQARRMKARYKEFGSNDTTLVHTLNASGLPIGRTMVAILESYQNEDGSITIPDVLINYMGGLQKITTYSE.

228-230 (TAE) is a binding site for L-serine. 259 to 261 (RSE) serves as a coordination point for ATP. Glu-282 contacts L-serine. 346 to 349 (EIAS) lines the ATP pocket. Ser-382 contributes to the L-serine binding site.

Belongs to the class-II aminoacyl-tRNA synthetase family. Type-1 seryl-tRNA synthetase subfamily. As to quaternary structure, homodimer. The tRNA molecule binds across the dimer.

It localises to the cytoplasm. The enzyme catalyses tRNA(Ser) + L-serine + ATP = L-seryl-tRNA(Ser) + AMP + diphosphate + H(+). It catalyses the reaction tRNA(Sec) + L-serine + ATP = L-seryl-tRNA(Sec) + AMP + diphosphate + H(+). Its pathway is aminoacyl-tRNA biosynthesis; selenocysteinyl-tRNA(Sec) biosynthesis; L-seryl-tRNA(Sec) from L-serine and tRNA(Sec): step 1/1. Functionally, catalyzes the attachment of serine to tRNA(Ser). Is also able to aminoacylate tRNA(Sec) with serine, to form the misacylated tRNA L-seryl-tRNA(Sec), which will be further converted into selenocysteinyl-tRNA(Sec). The sequence is that of Serine--tRNA ligase from Rickettsia canadensis (strain McKiel).